The chain runs to 156 residues: Small ribosomal subunit protein uS7 (156 aa).

This sequence belongs to the universal ribosomal protein uS7 family. In terms of assembly, part of the 30S ribosomal subunit. Contacts proteins S9 and S11.

Its function is as follows. One of the primary rRNA binding proteins, it binds directly to 16S rRNA where it nucleates assembly of the head domain of the 30S subunit. Is located at the subunit interface close to the decoding center, probably blocks exit of the E-site tRNA. The sequence is that of Small ribosomal subunit protein uS7 from Idiomarina loihiensis (strain ATCC BAA-735 / DSM 15497 / L2-TR).